A 70-amino-acid chain; its full sequence is Large ribosomal subunit protein bL31 (70 aa).

Zn(2+) contacts are provided by Cys16, Cys18, Cys37, and Cys40.

It belongs to the bacterial ribosomal protein bL31 family. Type A subfamily. As to quaternary structure, part of the 50S ribosomal subunit. It depends on Zn(2+) as a cofactor.

Functionally, binds the 23S rRNA. This chain is Large ribosomal subunit protein bL31, found in Cronobacter sakazakii (strain ATCC BAA-894) (Enterobacter sakazakii).